Consider the following 55-residue polypeptide: MPLDTWKSCCPQAVMYQSGDVYVISGCGVEVKYKDLKLATREFCKKVALKRVRKK.

This is an uncharacterized protein from Acidianus hospitalis (AFV-1).